The primary structure comprises 318 residues: Carnitine monooxygenase reductase subunit (318 aa).

Positions 5-107 (YEMFPAVVTR…SEPKNLFPLA (103 aa)) constitute an FAD-binding FR-type domain. The region spanning 233–318 (FTVVLAKSNQ…AKGKKLVLDL (86 aa)) is the 2Fe-2S ferredoxin-type domain. [2Fe-2S] cluster is bound by residues cysteine 267, cysteine 272, cysteine 275, and cysteine 305.

The protein belongs to the PDR/VanB family. CntB subfamily. In terms of assembly, composed of an oxygenase subunit (cntA) and a reductase subunit (cntB). Requires FMN as cofactor. It depends on [2Fe-2S] cluster as a cofactor.

It catalyses the reaction (R)-carnitine + NADH + O2 + H(+) = (3R)-3-hydroxy-4-oxobutanoate + trimethylamine + NAD(+) + H2O. The catalysed reaction is (R)-carnitine + NADPH + O2 + H(+) = (3R)-3-hydroxy-4-oxobutanoate + trimethylamine + NADP(+) + H2O. Its pathway is amine and polyamine metabolism; carnitine metabolism. Converts carnitine to trimethylamine and malic semialdehyde. This chain is Carnitine monooxygenase reductase subunit, found in Acinetobacter baumannii (strain ATCC 19606 / DSM 30007 / JCM 6841 / CCUG 19606 / CIP 70.34 / NBRC 109757 / NCIMB 12457 / NCTC 12156 / 81).